An 80-amino-acid chain; its full sequence is Exodeoxyribonuclease 7 small subunit (80 aa).

This sequence belongs to the XseB family. As to quaternary structure, heterooligomer composed of large and small subunits.

Its subcellular location is the cytoplasm. It catalyses the reaction Exonucleolytic cleavage in either 5'- to 3'- or 3'- to 5'-direction to yield nucleoside 5'-phosphates.. Functionally, bidirectionally degrades single-stranded DNA into large acid-insoluble oligonucleotides, which are then degraded further into small acid-soluble oligonucleotides. This chain is Exodeoxyribonuclease 7 small subunit, found in Escherichia coli (strain SE11).